The chain runs to 193 residues: Probable DNA-directed RNA polymerase subunit delta (193 aa).

The HTH HARE-type domain occupies 14-83; the sequence is LSMIEVARAI…GDNKWGLRSW (70 aa). 2 stretches are compositionally biased toward acidic residues: residues 119-133 and 143-193; these read EDAI…EDEN and YDND…ETND. The tract at residues 119 to 193 is disordered; that stretch reads EDAIDYNDDD…DDDYEDETND (75 aa).

It belongs to the RpoE family. RNAP is composed of a core of 2 alpha, a beta and a beta' subunits. The core is associated with a delta subunit and one of several sigma factors.

Participates in both the initiation and recycling phases of transcription. In the presence of the delta subunit, RNAP displays an increased specificity of transcription, a decreased affinity for nucleic acids, and an increased efficiency of RNA synthesis because of enhanced recycling. This Streptococcus thermophilus (strain CNRZ 1066) protein is Probable DNA-directed RNA polymerase subunit delta.